Reading from the N-terminus, the 445-residue chain is UPF0210 protein SPG_0223 (445 aa).

This sequence belongs to the UPF0210 family. Homodimer.

The chain is UPF0210 protein SPG_0223 from Streptococcus pneumoniae serotype 19F (strain G54).